The primary structure comprises 322 residues: Crystallin J1B (322 aa).

This sequence belongs to the ADP-ribosylglycohydrolase family. J1 crystallin subfamily. In terms of tissue distribution, expressed in the rhopalia. Present in both the large and small eyes.

This is Crystallin J1B from Tripedalia cystophora (Jellyfish).